The chain runs to 505 residues: Deoxyguanosinetriphosphate triphosphohydrolase (505 aa).

The HD domain maps to 66–273; the sequence is RLTHSMEVQQ…MEAADDISYC (208 aa).

It belongs to the dGTPase family. Type 1 subfamily. Homotetramer. Requires Mg(2+) as cofactor.

It carries out the reaction dGTP + H2O = 2'-deoxyguanosine + triphosphate + H(+). In terms of biological role, dGTPase preferentially hydrolyzes dGTP over the other canonical NTPs. This Escherichia coli O157:H7 protein is Deoxyguanosinetriphosphate triphosphohydrolase.